Reading from the N-terminus, the 160-residue chain is Cytochrome b6-f complex subunit 4 (160 aa).

The next 3 membrane-spanning stretches (helical) occupy residues 36–56 (LLYIFPVVIFGTIACNVGLAV), 95–115 (LLGVLLMAAVPAGLLTVPFLE), and 131–151 (TVFLIGTVVSIWLGIGAAMPI).

The protein belongs to the cytochrome b family. PetD subfamily. As to quaternary structure, the 4 large subunits of the cytochrome b6-f complex are cytochrome b6, subunit IV (17 kDa polypeptide, petD), cytochrome f and the Rieske protein, while the 4 small subunits are petG, petL, petM and petN. The complex functions as a dimer.

Its subcellular location is the plastid. The protein resides in the chloroplast thylakoid membrane. Its function is as follows. Component of the cytochrome b6-f complex, which mediates electron transfer between photosystem II (PSII) and photosystem I (PSI), cyclic electron flow around PSI, and state transitions. This Zygnema circumcarinatum (Green alga) protein is Cytochrome b6-f complex subunit 4.